The primary structure comprises 522 residues: Nitrogen fixation protein VnfA (522 aa).

The segment at 22–183 (LLYEMSQIAT…AQAVELYLVE (162 aa)) is a domain. Residues 35 to 177 (DLSSIISILL…ILATTTAQAV (143 aa)) enclose the GAF domain. The 230-residue stretch at 210–439 (IIGNSKPMLE…LENVIERAML (230 aa)) folds into the Sigma-54 factor interaction domain. ATP contacts are provided by residues 238–245 (GESGVGKE) and 301–310 (AAGGTIFLDE). The segment at residues 493-512 (MTEAATHLGLTARVLGLRMG) is a DNA-binding region (H-T-H motif).

Required for the expression of the V-dependent nitrogen fixation system in Azotobacter vinelandii. It is required for the regulation of nitrogenase 2 transcription. Interacts with sigma-54. The polypeptide is Nitrogen fixation protein VnfA (vnfA) (Azotobacter vinelandii).